The chain runs to 126 residues: Histone H2B type 1-B (126 aa).

Over residues 1 to 12 the composition is skewed to low complexity; sequence MPEPSKSAPAPK. The tract at residues 1–35 is disordered; it reads MPEPSKSAPAPKKGSKKAITKAQKKDGKKRKRSRK. Residue P2 is modified to N-acetylproline. E3 carries the ADP-ribosyl glutamic acid modification. K6 bears the N6-(2-hydroxyisobutyryl)lysine; alternate mark. The residue at position 6 (K6) is an N6-(beta-hydroxybutyryl)lysine; alternate. K6 carries the N6-acetyllysine; alternate modification. N6-butyryllysine; alternate is present on K6. An N6-crotonyllysine; alternate modification is found at K6. N6-lactoyllysine; alternate is present on K6. K6 participates in a covalent cross-link: Glycyl lysine isopeptide (Lys-Gly) (interchain with G-Cter in SUMO2); alternate. Position 7 is an ADP-ribosylserine (S7). Position 12 is an N6-(beta-hydroxybutyryl)lysine; alternate (K12). N6-acetyllysine; alternate is present on residues K12 and K13. An N6-crotonyllysine; alternate mark is found at K12 and K13. An N6-lactoyllysine; alternate modification is found at K12. N6-(2-hydroxyisobutyryl)lysine; alternate is present on K13. S15 is modified (phosphoserine; by STK4/MST1). An N6-acetyllysine; alternate mark is found at K16, K17, K21, and K24. Residues K16, K17, K21, and K24 each carry the N6-crotonyllysine; alternate modification. N6-lactoyllysine; alternate is present on residues K16, K17, K21, and K24. Residues K17 and K21 each carry the N6-(beta-hydroxybutyryl)lysine; alternate modification. K17 is modified (N6-glutaryllysine; alternate). 2 positions are modified to N6-(2-hydroxyisobutyryl)lysine; alternate: K21 and K24. At K21 the chain carries N6-butyryllysine; alternate. K21 participates in a covalent cross-link: Glycyl lysine isopeptide (Lys-Gly) (interchain with G-Cter in SUMO2); alternate. The residue at position 25 (K25) is an N6-(2-hydroxyisobutyryl)lysine. K35 is modified (N6-(2-hydroxyisobutyryl)lysine; alternate). K35 carries the post-translational modification N6-(beta-hydroxybutyryl)lysine; alternate. K35 bears the N6-crotonyllysine; alternate mark. An N6-glutaryllysine; alternate modification is found at K35. Position 35 is an N6-succinyllysine; alternate (K35). K35 is covalently cross-linked (Glycyl lysine isopeptide (Lys-Gly) (interchain with G-Cter in ubiquitin); alternate). A PolyADP-ribosyl glutamic acid modification is found at E36. S37 carries the phosphoserine; by AMPK modification. Residues K44, K47, and K58 each carry the N6-(2-hydroxyisobutyryl)lysine; alternate modification. Position 44 is an N6-lactoyllysine; alternate (K44). N6-glutaryllysine; alternate occurs at positions 44 and 47. An N6-methyllysine; alternate modification is found at K47. At K58 the chain carries N6,N6-dimethyllysine; alternate. R80 carries the dimethylated arginine modification. Residue K86 is modified to N6-(2-hydroxyisobutyryl)lysine; alternate. N6-(beta-hydroxybutyryl)lysine; alternate is present on K86. At K86 the chain carries N6-acetyllysine; alternate. K86 carries the post-translational modification N6-lactoyllysine; alternate. Position 86 is an N6,N6,N6-trimethyllysine; alternate (K86). 2 positions are modified to omega-N-methylarginine: R87 and R93. K109 carries the post-translational modification N6-(2-hydroxyisobutyryl)lysine; alternate. An N6-lactoyllysine; alternate modification is found at K109. K109 bears the N6-glutaryllysine; alternate mark. K109 is modified (N6-methyllysine; alternate). An O-linked (GlcNAc) serine glycan is attached at S113. T116 is modified (phosphothreonine). N6-(2-hydroxyisobutyryl)lysine; alternate occurs at positions 117 and 121. 2 positions are modified to N6-(beta-hydroxybutyryl)lysine; alternate: K117 and K121. N6-lactoyllysine; alternate occurs at positions 117 and 121. An N6-glutaryllysine; alternate mark is found at K117 and K121. An N6-succinyllysine; alternate mark is found at K117 and K121. K117 carries the N6-malonyllysine; alternate modification. N6-methylated lysine; alternate is present on K117. K121 participates in a covalent cross-link: Glycyl lysine isopeptide (Lys-Gly) (interchain with G-Cter in ubiquitin); alternate.

The protein belongs to the histone H2B family. As to quaternary structure, the nucleosome is a histone octamer containing two molecules each of H2A, H2B, H3 and H4 assembled in one H3-H4 heterotetramer and two H2A-H2B heterodimers. The octamer wraps approximately 147 bp of DNA. Post-translationally, monoubiquitination at Lys-35 (H2BK34Ub) by the MSL1/MSL2 dimer is required for histone H3 'Lys-4' (H3K4me) and 'Lys-79' (H3K79me) methylation and transcription activation at specific gene loci, such as HOXA9 and MEIS1 loci. Similarly, monoubiquitination at Lys-121 (H2BK120Ub) by the RNF20/40 complex gives a specific tag for epigenetic transcriptional activation and is also prerequisite for histone H3 'Lys-4' and 'Lys-79' methylation. It also functions cooperatively with the FACT dimer to stimulate elongation by RNA polymerase II. H2BK120Ub also acts as a regulator of mRNA splicing: deubiquitination by USP49 is required for efficient cotranscriptional splicing of a large set of exons. Phosphorylation at Ser-37 (H2BS36ph) by AMPK in response to stress promotes transcription. Phosphorylated on Ser-15 (H2BS14ph) by STK4/MST1 during apoptosis; which facilitates apoptotic chromatin condensation. Also phosphorylated on Ser-15 in response to DNA double strand breaks (DSBs), and in correlation with somatic hypermutation and immunoglobulin class-switch recombination. In terms of processing, glcNAcylation at Ser-113 promotes monoubiquitination of Lys-121. It fluctuates in response to extracellular glucose, and associates with transcribed genes. Post-translationally, ADP-ribosylated by PARP1 or PARP2 on Ser-7 (H2BS6ADPr) in response to DNA damage. H2BS6ADPr promotes recruitment of CHD1L. Mono-ADP-ribosylated on Glu-3 (H2BE2ADPr) by PARP3 in response to single-strand breaks. Poly ADP-ribosylation on Glu-36 (H2BE35ADPr) by PARP1 regulates adipogenesis: it inhibits phosphorylation at Ser-37 (H2BS36ph), thereby blocking expression of pro-adipogenetic genes. Crotonylation (Kcr) is specifically present in male germ cells and marks testis-specific genes in post-meiotic cells, including X-linked genes that escape sex chromosome inactivation in haploid cells. Crotonylation marks active promoters and enhancers and confers resistance to transcriptional repressors. It is also associated with post-meiotically activated genes on autosomes. In terms of processing, lactylated in macrophages by EP300/P300 by using lactoyl-CoA directly derived from endogenous or exogenous lactate, leading to stimulates gene transcription.

It localises to the nucleus. Its subcellular location is the chromosome. Functionally, core component of nucleosome. Nucleosomes wrap and compact DNA into chromatin, limiting DNA accessibility to the cellular machineries which require DNA as a template. Histones thereby play a central role in transcription regulation, DNA repair, DNA replication and chromosomal stability. DNA accessibility is regulated via a complex set of post-translational modifications of histones, also called histone code, and nucleosome remodeling. The chain is Histone H2B type 1-B from Homo sapiens (Human).